A 1066-amino-acid polypeptide reads, in one-letter code: FHIP family protein GH13096 (1066 aa).

The span at 1–15 (MSWLRTSPLRQSLTR) shows a compositional bias: polar residues. Positions 1–33 (MSWLRTSPLRQSLTRNSGGNGSGGSGNSGNASA) are disordered. A compositionally biased stretch (gly residues) spans 18–27 (GGNGSGGSGN). At serine 512 the chain carries Phosphoserine. 3 disordered regions span residues 647 to 688 (SFKW…NSSG), 827 to 885 (DNSP…RSDN), and 942 to 1010 (SRGV…FNSE). Residues 658–687 (NDATTTTATSDPDVEHNNSSNHNNSSINSS) show a composition bias toward low complexity. Position 829 is a phosphoserine (serine 829). Residues 836-856 (HQQQQLQHTTNSTHQQQQAQQ) are compositionally biased toward low complexity. Over residues 950-963 (PRGNTCETSLSTTP) the composition is skewed to polar residues. Over residues 967 to 996 (AQATSASSTNSSIGGSTQTLSATHSSSTLH) the composition is skewed to low complexity. Residues 1001-1010 (GPQTASFNSE) are compositionally biased toward polar residues.

This sequence belongs to the FHIP family.

In Drosophila grimshawi (Hawaiian fruit fly), this protein is FHIP family protein GH13096.